Consider the following 495-residue polypeptide: ATP synthase subunit beta, chloroplastic (495 aa).

172–179 serves as a coordination point for ATP; the sequence is GGAGVGKT.

The protein belongs to the ATPase alpha/beta chains family. In terms of assembly, F-type ATPases have 2 components, CF(1) - the catalytic core - and CF(0) - the membrane proton channel. CF(1) has five subunits: alpha(3), beta(3), gamma(1), delta(1), epsilon(1). CF(0) has four main subunits: a(1), b(1), b'(1) and c(9-12).

The protein resides in the plastid. It is found in the chloroplast thylakoid membrane. The enzyme catalyses ATP + H2O + 4 H(+)(in) = ADP + phosphate + 5 H(+)(out). Functionally, produces ATP from ADP in the presence of a proton gradient across the membrane. The catalytic sites are hosted primarily by the beta subunits. This Scilla messeniaca (Greek squill) protein is ATP synthase subunit beta, chloroplastic.